The chain runs to 128 residues: Fluoride-specific ion channel FluC (128 aa).

Transmembrane regions (helical) follow at residues 5-25 (LFISCGAILGASLRWAIGLLF), 34-54 (FGTLIANLFGCLIIGVLLGLF), 67-87 (FLITGFLGSLTTFSSFSSEVV), and 99-119 (FCVLMMHLFGCLAMTVLGIWI). Na(+) contacts are provided by glycine 74 and threonine 77.

It belongs to the fluoride channel Fluc/FEX (TC 1.A.43) family.

The protein localises to the cell inner membrane. The catalysed reaction is fluoride(in) = fluoride(out). With respect to regulation, na(+) is not transported, but it plays an essential structural role and its presence is essential for fluoride channel function. Fluoride-specific ion channel. Important for reducing fluoride concentration in the cell, thus reducing its toxicity. The polypeptide is Fluoride-specific ion channel FluC (Haemophilus influenzae (strain PittGG)).